The sequence spans 490 residues: Pentatricopeptide repeat-containing protein At2g20710, mitochondrial (490 aa).

The transit peptide at 1 to 86 (MKHLLLLRLV…IKMLRKFSRF (86 aa)) directs the protein to the mitochondrion. PPR repeat units lie at residues 138 to 172 (NYHLYGALLNCYASKKVLHKAEQVFQEMKELGFLK), 173 to 207 (GCLPYNVMLNLYVRTGKYTMVEKLLREMEDETVKP), 208 to 243 (DIFTVNTRLHAYSVVSDVEGMEKFLMRCEADQGLHL), 244 to 274 (DWRTYADTANGYIKAGLTEKALEMLRKSEQM), 280 to 310 (RKHAYEVLMSFYGAAGKKEEVYRLWSLYKEL), 314 to 344 (YNTGYISVISALLKMDDIEEVEKIMEEWEAG), 349 to 379 (DIRIPHLLITGYCKKGMMEKAEEVVNILVQK), and 384 to 421 (DTSTWERLALGYKMAGKMEKAVEKWKRAIEVSKPGWRP).

Belongs to the PPR family. P subfamily.

Its subcellular location is the mitochondrion. The protein is Pentatricopeptide repeat-containing protein At2g20710, mitochondrial of Arabidopsis thaliana (Mouse-ear cress).